Consider the following 266-residue polypeptide: Diphthine synthase (266 aa).

S-adenosyl-L-methionine is bound by residues leucine 9, aspartate 85, isoleucine 88, 113–114, leucine 168, alanine 210, and histidine 235; that span reads TA.

Belongs to the diphthine synthase family. Homodimer.

The enzyme catalyses 2-[(3S)-amino-3-carboxypropyl]-L-histidyl-[translation elongation factor 2] + 3 S-adenosyl-L-methionine = diphthine-[translation elongation factor 2] + 3 S-adenosyl-L-homocysteine + 3 H(+). Its pathway is protein modification; peptidyl-diphthamide biosynthesis. Functionally, S-adenosyl-L-methionine-dependent methyltransferase that catalyzes the trimethylation of the amino group of the modified target histidine residue in translation elongation factor 2 (EF-2), to form an intermediate called diphthine. The three successive methylation reactions represent the second step of diphthamide biosynthesis. The sequence is that of Diphthine synthase from Natronomonas pharaonis (strain ATCC 35678 / DSM 2160 / CIP 103997 / JCM 8858 / NBRC 14720 / NCIMB 2260 / Gabara) (Halobacterium pharaonis).